Here is a 397-residue protein sequence, read N- to C-terminus: Bifunctional arginine demethylase and lysyl-hydroxylase psr-1 (397 aa).

Residues 146–310 (RKTKKLSEDY…LVWPKTVRGR (165 aa)) enclose the JmjC domain. Position 189 (Thr189) interacts with substrate. Fe cation-binding residues include His192 and Asp194. Asn202 lines the 2-oxoglutarate pocket. Substrate is bound at residue Lys209. Fe cation is bound at residue His278. Thr290 lines the 2-oxoglutarate pocket. The segment covering 334–344 (SCTDTPPQSLN) has biased composition (polar residues). The disordered stretch occupies residues 334-383 (SCTDTPPQSLNDSSSDSSSSSSSSDDSSDSETEEDSGRCGLGNRKRRNDV). The span at 345-358 (DSSSDSSSSSSSSD) shows a compositional bias: low complexity.

It belongs to the JMJD6 family. Interacts with ced-5 and ced-12. The cofactor is Fe(2+).

The protein localises to the nucleus. Functionally, dioxygenase that can both act as a histone arginine demethylase and a lysyl-hydroxylase. The chain is Bifunctional arginine demethylase and lysyl-hydroxylase psr-1 (psr-1) from Caenorhabditis briggsae.